The primary structure comprises 367 residues: Queuine tRNA-ribosyltransferase (367 aa).

Catalysis depends on D92, which acts as the Proton acceptor. Residues 92–96, D146, Q188, and G215 contribute to the substrate site; that span reads DSGGF. The segment at 246–252 is RNA binding; that stretch reads GVGTPKD. D265 acts as the Nucleophile in catalysis. Zn(2+) is bound by residues C303, C305, C308, and H334.

This sequence belongs to the queuine tRNA-ribosyltransferase family. In terms of assembly, homodimer. Within each dimer, one monomer is responsible for RNA recognition and catalysis, while the other monomer binds to the replacement base PreQ1. It depends on Zn(2+) as a cofactor.

The enzyme catalyses 7-aminomethyl-7-carbaguanine + guanosine(34) in tRNA = 7-aminomethyl-7-carbaguanosine(34) in tRNA + guanine. The protein operates within tRNA modification; tRNA-queuosine biosynthesis. In terms of biological role, catalyzes the base-exchange of a guanine (G) residue with the queuine precursor 7-aminomethyl-7-deazaguanine (PreQ1) at position 34 (anticodon wobble position) in tRNAs with GU(N) anticodons (tRNA-Asp, -Asn, -His and -Tyr). Catalysis occurs through a double-displacement mechanism. The nucleophile active site attacks the C1' of nucleotide 34 to detach the guanine base from the RNA, forming a covalent enzyme-RNA intermediate. The proton acceptor active site deprotonates the incoming PreQ1, allowing a nucleophilic attack on the C1' of the ribose to form the product. After dissociation, two additional enzymatic reactions on the tRNA convert PreQ1 to queuine (Q), resulting in the hypermodified nucleoside queuosine (7-(((4,5-cis-dihydroxy-2-cyclopenten-1-yl)amino)methyl)-7-deazaguanosine). This is Queuine tRNA-ribosyltransferase from Francisella tularensis subsp. novicida (strain U112).